We begin with the raw amino-acid sequence, 293 residues long: Haloalkane dehalogenase (293 aa).

Residues 34 to 158 form the AB hydrolase-1 domain; it reads PVLFLHGNPT…FQAFRTADVG (125 aa). The Nucleophile role is filled by Asp-106. The active-site Proton donor is the Glu-130. The Proton acceptor role is filled by His-272.

The protein belongs to the haloalkane dehalogenase family. Type 2 subfamily. In terms of assembly, monomer.

The catalysed reaction is 1-haloalkane + H2O = a halide anion + a primary alcohol + H(+). It functions in the pathway xenobiotic degradation; haloalkane degradation. It participates in xenobiotic degradation; 1,3-dichloropropene degradation. Functionally, catalyzes hydrolytic cleavage of carbon-halogen bonds in halogenated aliphatic compounds, leading to the formation of the corresponding primary alcohols, halide ions and protons. Has a broad substrate specificity, as it is able to dehalogenate mono- and di- chlorinated and brominated alkanes (up to at least C10), and the two isomers of 1,3-dichloropropene to 3-chloroallyl alcohol; the highest activity was found with 1,2-dibromoethane, while no activity was observed with the analog 1,2-dichloroethane. The polypeptide is Haloalkane dehalogenase (dhaA) (Pseudomonas pavonaceae).